Consider the following 644-residue polypeptide: Keratin, type II cytoskeletal 1 (644 aa).

Residues 2-179 (SRQFSSRSGY…DPEIQKVKSR (178 aa)) are head. Omega-N-methylarginine is present on Arg12. Phosphoserine is present on residues Ser18 and Ser21. A compositionally biased stretch (low complexity) spans 22-38 (AGIINYQRRTTSSSTRR). The disordered stretch occupies residues 22–47 (AGIINYQRRTTSSSTRRSGGGGGRFS). The residue at position 45 (Arg45) is an Omega-N-methylarginine. The residue at position 66 (Ser66) is a Phosphoserine. Omega-N-methylarginine is present on Arg82. The tract at residues 180–215 (EREQIKSLNNQFASFIDKVRFLEQQNQVLQTKWELL) is coil 1A. The region spanning 180–493 (EREQIKSLNN…TLLEGEESRM (314 aa)) is the IF rod domain. A linker 1 region spans residues 216 to 234 (QQVDTSTRTHNLEPYFESF). Positions 235–326 (INNLRRRVDQ…ALYQAELSQM (92 aa)) are coil 1B. Lys276 is modified (N6,N6-dimethyllysine). The segment at 327-350 (QTQISETNVILSMDNNRSLDLDSI) is linker 12. The residue at position 344 (Ser344) is a Phosphoserine. Residues 351–489 (IAEVKAQYED…ATYRTLLEGE (139 aa)) form a coil 2 region. 2 disordered regions span residues 489–523 (EESR…GGGG) and 568–644 (SGGG…GVTR). The tail stretch occupies residues 490 to 644 (ESRMSGECAP…VSTTYSGVTR (155 aa)). Positions 501–511 (VSVSVSTSHTT) are enriched in low complexity. 2 stretches are compositionally biased toward gly residues: residues 513 to 523 (SGGGSRGGGGG) and 568 to 620 (SGGG…GSSS). 2 positions are modified to omega-N-methylarginine: Arg518 and Arg588. Over residues 621–631 (GGVKSSGGSSS) the composition is skewed to low complexity. Over residues 632 to 644 (VKFVSTTYSGVTR) the composition is skewed to polar residues.

It belongs to the intermediate filament family. As to quaternary structure, heterotetramer of two type I and two type II keratins. Heterodimer with KRT10. Two heterodimers of KRT1 and KRT10 form a heterotetramer. Forms a heterodimer with KRT14; the interaction is more abundant in the absence of KRT5. Interacts with PLEC isoform 1C, when in a heterodimer with KRT10. Interacts with ITGB1 in the presence of RACK1 and SRC, and with RACK1. Interacts with C1QBP; the association represents a cell surface kininogen receptor. Interacts with EPPK1; interaction is dependent of higher-order structure of intermediate filament. Post-translationally, undergoes deimination of some arginine residues (citrullination). The source of this protein is neonatal foreskin. The 67-kDa type II keratins are expressed in terminally differentiating epidermis.

The protein resides in the cell membrane. The protein localises to the cytoplasm. Functionally, may regulate the activity of kinases such as PKC and SRC via binding to integrin beta-1 (ITB1) and the receptor of activated protein C kinase 1 (RACK1). In complex with C1QBP is a high affinity receptor for kininogen-1/HMWK. This is Keratin, type II cytoskeletal 1 (KRT1) from Homo sapiens (Human).